A 232-amino-acid polypeptide reads, in one-letter code: Large ribosomal subunit protein uL1 (232 aa).

The protein belongs to the universal ribosomal protein uL1 family. In terms of assembly, part of the 50S ribosomal subunit.

Functionally, binds directly to 23S rRNA. The L1 stalk is quite mobile in the ribosome, and is involved in E site tRNA release. In terms of biological role, protein L1 is also a translational repressor protein, it controls the translation of the L11 operon by binding to its mRNA. In Marinobacter nauticus (strain ATCC 700491 / DSM 11845 / VT8) (Marinobacter aquaeolei), this protein is Large ribosomal subunit protein uL1.